The sequence spans 210 residues: Potassium-transporting ATPase KdpC subunit (210 aa).

A helical membrane pass occupies residues 13–33 (LVTLVLLLVCGLAYPLILTGI).

The protein belongs to the KdpC family. As to quaternary structure, the system is composed of three essential subunits: KdpA, KdpB and KdpC.

It localises to the cell membrane. Functionally, part of the high-affinity ATP-driven potassium transport (or Kdp) system, which catalyzes the hydrolysis of ATP coupled with the electrogenic transport of potassium into the cytoplasm. This subunit acts as a catalytic chaperone that increases the ATP-binding affinity of the ATP-hydrolyzing subunit KdpB by the formation of a transient KdpB/KdpC/ATP ternary complex. This is Potassium-transporting ATPase KdpC subunit from Clostridium kluyveri (strain ATCC 8527 / DSM 555 / NBRC 12016 / NCIMB 10680 / K1).